A 154-amino-acid chain; its full sequence is Superoxide dismutase [Cu-Zn] (154 aa).

Cu cation is bound by residues His-47, His-49, and His-64. A disulfide bond links Cys-58 and Cys-147. Zn(2+)-binding residues include His-64, His-72, His-81, and Asp-84. His-121 lines the Cu cation pocket. Position 144 (Arg-144) interacts with substrate.

It belongs to the Cu-Zn superoxide dismutase family. In terms of assembly, homodimer. The cofactor is Cu cation. Zn(2+) serves as cofactor.

The protein resides in the cytoplasm. The catalysed reaction is 2 superoxide + 2 H(+) = H2O2 + O2. Functionally, destroys radicals which are normally produced within the cells and which are toxic to biological systems. The sequence is that of Superoxide dismutase [Cu-Zn] (sodC) from Aspergillus fumigatus (strain ATCC MYA-4609 / CBS 101355 / FGSC A1100 / Af293) (Neosartorya fumigata).